The following is a 316-amino-acid chain: Pantothenate kinase (316 aa).

95–102 (GSVAVGKS) contacts ATP.

It belongs to the prokaryotic pantothenate kinase family.

It localises to the cytoplasm. It catalyses the reaction (R)-pantothenate + ATP = (R)-4'-phosphopantothenate + ADP + H(+). Its pathway is cofactor biosynthesis; coenzyme A biosynthesis; CoA from (R)-pantothenate: step 1/5. In Shewanella sp. (strain MR-4), this protein is Pantothenate kinase.